The chain runs to 573 residues: DNA ligase (573 aa).

ATP is bound at residue glutamate 248. Lysine 250 serves as the catalytic N6-AMP-lysine intermediate. Positions 255, 270, 299, 340, 432, and 438 each coordinate ATP.

The protein belongs to the ATP-dependent DNA ligase family. Mg(2+) serves as cofactor.

It carries out the reaction ATP + (deoxyribonucleotide)n-3'-hydroxyl + 5'-phospho-(deoxyribonucleotide)m = (deoxyribonucleotide)n+m + AMP + diphosphate.. Functionally, DNA ligase that seals nicks in double-stranded DNA during DNA replication, DNA recombination and DNA repair. This is DNA ligase from Methanocaldococcus jannaschii (strain ATCC 43067 / DSM 2661 / JAL-1 / JCM 10045 / NBRC 100440) (Methanococcus jannaschii).